The following is a 701-amino-acid chain: Sodium/hydrogen exchanger 6 (701 aa).

2 consecutive transmembrane segments (helical) span residues 71-91 and 103-123; these read SANL…IWLF and GLAM…IHVP. A glycan (N-linked (GlcNAc...) asparagine) is linked at Asn-128. 8 consecutive transmembrane segments (helical) span residues 176–196, 211–231, 252–272, 278–298, 324–344, 372–392, 414–434, and 436–456; these read VTFD…FYAG, ILAY…SIMY, CLLF…AIFH, VELY…AIVL, IGIF…TGVV, TFLL…FCGI, FELL…LTLF, and FQNH…IFLG. Residue Lys-475 forms a Glycyl lysine isopeptide (Lys-Gly) (interchain with G-Cter in ubiquitin) linkage. 2 helical membrane passes run 479–499 and 515–535; these read NFQH…ALAI and LLIV…MLSC.

The protein belongs to the monovalent cation:proton antiporter 1 (CPA1) transporter (TC 2.A.36) family. In terms of assembly, homodimer. Interacts with RACK1; regulates the distribution of SLC9A6 between endosomes and the plasma membrane. Post-translationally, ubiquitinated (in vitro). Glycosylated. Ubiquitous. High expression in brain, skeletal muscle, and heart, but is also detected at lower levels in most other tissues.

Its subcellular location is the endosome membrane. It is found in the recycling endosome membrane. The protein localises to the early endosome membrane. The protein resides in the late endosome membrane. It localises to the cell membrane. It carries out the reaction Na(+)(in) + H(+)(out) = Na(+)(out) + H(+)(in). It catalyses the reaction K(+)(in) + H(+)(out) = K(+)(out) + H(+)(in). Endosomal Na(+), K(+)/H(+) antiporter. Mediates the electroneutral exchange of endosomal luminal H(+) for a cytosolic Na(+) or K(+). By facilitating proton efflux, SLC9A6 counteracts the acidity generated by vacuolar (V)-ATPase, thereby limiting luminal acidification. Responsible for alkalizing and maintaining the endosomal pH, and consequently in, e.g., endosome maturation and trafficking of recycling endosomal cargo. Plays a critical role during neurodevelopment by regulating synaptic development and plasticity. Implicated in the maintenance of cell polarity in a manner that is dependent on its ability to modulate intravesicular pH. Regulates intracelular pH in some specialized cells, osteoclasts and stereocilia where this transporter localizes to the plasma membrane. The chain is Sodium/hydrogen exchanger 6 from Homo sapiens (Human).